The sequence spans 1399 residues: DNA-directed RNA polymerase subunit beta' (1399 aa).

Zn(2+) is bound by residues C70, C72, C85, and C88. D460, D462, and D464 together coordinate Mg(2+). Residues C814, C888, C895, and C898 each coordinate Zn(2+).

This sequence belongs to the RNA polymerase beta' chain family. As to quaternary structure, the RNAP catalytic core consists of 2 alpha, 1 beta, 1 beta' and 1 omega subunit. When a sigma factor is associated with the core the holoenzyme is formed, which can initiate transcription. It depends on Mg(2+) as a cofactor. Requires Zn(2+) as cofactor.

The enzyme catalyses RNA(n) + a ribonucleoside 5'-triphosphate = RNA(n+1) + diphosphate. Functionally, DNA-dependent RNA polymerase catalyzes the transcription of DNA into RNA using the four ribonucleoside triphosphates as substrates. The sequence is that of DNA-directed RNA polymerase subunit beta' from Pseudomonas putida (strain W619).